We begin with the raw amino-acid sequence, 248 residues long: PF03932 family protein CutC (248 aa).

This sequence belongs to the CutC family. Homodimer.

The protein resides in the cytoplasm. The chain is PF03932 family protein CutC from Shigella dysenteriae serotype 1 (strain Sd197).